The chain runs to 203 residues: Non-specific lipid transfer protein GPI-anchored 20 (203 aa).

The N-terminal stretch at 1 to 21 is a signal peptide; it reads MSKIISLVVAMIAVLALPIRG. 4 disulfide bridges follow: cysteine 29-cysteine 74, cysteine 40-cysteine 58, cysteine 59-cysteine 99, and cysteine 72-cysteine 108. Residues asparagine 46, asparagine 50, and asparagine 88 are each glycosylated (N-linked (GlcNAc...) asparagine). The tract at residues 119-182 is disordered; sequence GPAATFGPSM…TSRPSETPSS (64 aa). 2 stretches are compositionally biased toward polar residues: residues 144–156 and 169–179; these read AAQT…TRPF and DGGSTSRPSET. A lipid anchor (GPI-anchor amidated serine) is attached at serine 172. Positions 173-203 are cleaved as a propeptide — removed in mature form; sequence TSRPSETPSSAYALSPSLLFFSIALVALKFY.

Belongs to the plant LTP family. In terms of tissue distribution, expressed in seedlings, preferentially in hypocotyls and roots. Also observed in siliques and sepals.

It localises to the cell membrane. In terms of biological role, probable lipid transfer protein. The polypeptide is Non-specific lipid transfer protein GPI-anchored 20 (Arabidopsis thaliana (Mouse-ear cress)).